The sequence spans 759 residues: RNA-binding protein 28 (759 aa).

A2 is modified (N-acetylalanine). In terms of domain architecture, RRM 1 spans 4 to 80; that stretch reads LTLFVGRLPP…CKINVTVAKK (77 aa). The segment at 84–105 is disordered; that stretch reads NKTKEKGKNENSECPKKEPKAK. Over residues 85–101 the composition is skewed to basic and acidic residues; the sequence is KTKEKGKNENSECPKKE. An RRM 2 domain is found at 114–191; that stretch reads ARLIIRNLSF…RTVAVDWAVA (78 aa). Phosphoserine is present on S122. Residues 201–330 are disordered; the sequence is VSAIGEEKSH…NKKKRKLPSD (130 aa). Residues 205–224 show a composition bias toward basic and acidic residues; the sequence is GEEKSHESKHQESVKKKGRE. Composition is skewed to acidic residues over residues 225 to 256 and 284 to 313; these read EEDM…EEEN and SEED…EEQE. RRM domains follow at residues 335 to 419 and 487 to 597; these read KTVF…LAVT and TRLC…RSLQ. S397 carries the phosphoserine modification. Residues 594–759 are disordered; sequence RSLQKMRSKP…LAKRSKWFDS (166 aa). Residues 615 to 640 show a composition bias toward basic and acidic residues; that stretch reads PAKDQQQKAAQHHTEEQSKVPPEQKR. A Glycyl lysine isopeptide (Lys-Gly) (interchain with G-Cter in SUMO2) cross-link involves residue K653. Residues 689-698 are compositionally biased toward basic residues; the sequence is VKPVHPKKPK. Over residues 700-715 the composition is skewed to polar residues; sequence QINQWKQEKQQLSSEQ.

As to quaternary structure, interacts with U1, U2, U4, U5, and U6 spliceosomal small nuclear RNAs (snRNAs). As to expression, ubiquitously expressed.

Its subcellular location is the nucleus. The protein resides in the nucleolus. Functionally, nucleolar component of the spliceosomal ribonucleoprotein complexes. The polypeptide is RNA-binding protein 28 (RBM28) (Homo sapiens (Human)).